A 283-amino-acid chain; its full sequence is Polyprenyl-phosphate transporter (283 aa).

9 consecutive transmembrane segments (helical) span residues 27-47 (GTIALLLGIYNQFIASISGIF), 51-71 (FWPSFTFLIPIIIGMLLAMGS), 85-105 (IPTMFFFGGLIIGIVPYLLKI), 112-132 (FTTKHYMMVIAGIAILIVITL), 148-168 (TSLIIKYFIAGMCASSAMLLP), 169-189 (GISGSFMLLVFGVYGTVMLAI), 197-217 (FAGLPILLAVGFGVLAGFIIS), 230-250 (LMTFALIIGFVVGSLFAVFPG), and 255-275 (IVMWFVSLVVFIIGFIVSLTL).

This sequence belongs to the PopT family.

Its subcellular location is the cell membrane. With respect to regulation, active in alkaline conditions. Its function is as follows. Flippase that catalyzes the transport of undecaprenyl phosphate (UndP) across the cytoplasmic membrane, from the external side to the cytoplasmic side. Is involved in UndP recycling during peptidoglycan synthesis. Necessary for peptidoglycan maintenance. The chain is Polyprenyl-phosphate transporter from Staphylococcus aureus (strain NCTC 8325 / PS 47).